A 904-amino-acid polypeptide reads, in one-letter code: Protein translocase subunit SecA (904 aa).

ATP is bound by residues Gln89, 107–111 (GEGKT), and Asp502. Residues Cys888, Cys890, Cys899, and His900 each coordinate Zn(2+).

The protein belongs to the SecA family. In terms of assembly, monomer and homodimer. Part of the essential Sec protein translocation apparatus which comprises SecA, SecYEG and auxiliary proteins SecDF-YajC and YidC. Requires Zn(2+) as cofactor.

It is found in the cell inner membrane. It localises to the cytoplasm. It carries out the reaction ATP + H2O + cellular proteinSide 1 = ADP + phosphate + cellular proteinSide 2.. Its function is as follows. Part of the Sec protein translocase complex. Interacts with the SecYEG preprotein conducting channel. Has a central role in coupling the hydrolysis of ATP to the transfer of proteins into and across the cell membrane, serving both as a receptor for the preprotein-SecB complex and as an ATP-driven molecular motor driving the stepwise translocation of polypeptide chains across the membrane. The polypeptide is Protein translocase subunit SecA (Roseobacter denitrificans (strain ATCC 33942 / OCh 114) (Erythrobacter sp. (strain OCh 114))).